The following is a 680-amino-acid chain: Harmonin-binding protein USHBP1 (680 aa).

Positions 1 to 15 (MSARATRPRSRRGRH) are enriched in basic residues. 2 disordered regions span residues 1–51 (MSAR…YLGP) and 134–161 (KSVE…PGQQ). A coiled-coil region spans residues 179 to 218 (NREDELACTQASLQDAQAEKETLQRQVQELEDSLMQMEAS). Disordered regions lie at residues 220–247 (PTPI…VPQD) and 384–405 (TMEV…PTPE). Coiled-coil stretches lie at residues 363–386 (TKGD…ATME) and 467–506 (QIQQ…LRAQ). The tract at residues 524–549 (FAGDGSSGGSSEDPSSEEEAGEDRQQ) is disordered. The stretch at 573–662 (QELSASLARA…QAEELAVLTA (90 aa)) forms a coiled coil.

It belongs to the MCC family. As to quaternary structure, interacts via its C-terminus with the first PDZ domain of USH1C.

The chain is Harmonin-binding protein USHBP1 from Mus musculus (Mouse).